Consider the following 645-residue polypeptide: Acetyl-coenzyme A synthetase (645 aa).

CoA is bound by residues 190–193 and T309; that span reads RGGR. ATP contacts are provided by residues 385–387, 409–414, D498, and R513; these read GEP and DTWWQT. S521 contributes to the CoA binding site. An ATP-binding site is contributed by R524. Mg(2+)-binding residues include V535, H537, and V540. R582 is a binding site for CoA. An N6-acetyllysine modification is found at K607.

Belongs to the ATP-dependent AMP-binding enzyme family. Requires Mg(2+) as cofactor. Acetylated. Deacetylation by the SIR2-homolog deacetylase activates the enzyme.

The catalysed reaction is acetate + ATP + CoA = acetyl-CoA + AMP + diphosphate. Its function is as follows. Catalyzes the conversion of acetate into acetyl-CoA (AcCoA), an essential intermediate at the junction of anabolic and catabolic pathways. AcsA undergoes a two-step reaction. In the first half reaction, AcsA combines acetate with ATP to form acetyl-adenylate (AcAMP) intermediate. In the second half reaction, it can then transfer the acetyl group from AcAMP to the sulfhydryl group of CoA, forming the product AcCoA. This is Acetyl-coenzyme A synthetase from Methylocella silvestris (strain DSM 15510 / CIP 108128 / LMG 27833 / NCIMB 13906 / BL2).